Reading from the N-terminus, the 386-residue chain is MAVNLLKTQQFSTISIAASFLKPIESAAEPEEETIYFYSAAAHLKQQIIDAFGYAAGCRFMYSANLFFDQQLKTCGTRLIHPSFNKNLHLDALMKTFADMSFPSSLSADAVEKAKDELLLKIEKKFADPFSYSAARLAEEAFGNPMYGTAMFGRKDRIQAIHPQRFLNATDFIVDLLSQHKQLNILGHVQACDIPGHASQTSAVTAGRFLVNRHVFETETRSAAGPSVLTLGFDCGEMKDASDYIKIQLIDGLLGKYGHSALFKHFREKDLAVYHVITRYDIMNNLLLVSICTNQLHEKEIPPRVLEAVSHFSADERELEQAKQFFRNEMLLQFDSPEGLLAYMGILRRFSCTKEDLLDGISAVTCRDVLQFITTINYIGAHVVRG.

Involved in the production of the bacteriocin subtilosin. The sequence is that of Antilisterial bacteriocin subtilosin biosynthesis protein AlbE (albE) from Bacillus subtilis.